Reading from the N-terminus, the 333-residue chain is SPbeta prophage-derived recombinase-like protein YomM (333 aa).

The region spanning 30–113 is the Core-binding (CB) domain; the sequence is EEHRNLVQEF…GVSSLNNYIE (84 aa). The Tyr recombinase domain occupies 142–332; sequence YEKVKVTYDD…DFEEEKNQIF (191 aa). Residues Arg-180, Lys-211, His-281, and His-308 contribute to the active site. The O-(3'-phospho-DNA)-tyrosine intermediate role is filled by Tyr-319.

This sequence belongs to the 'phage' integrase family.

In Bacillus subtilis (strain 168), this protein is SPbeta prophage-derived recombinase-like protein YomM (yomM).